The primary structure comprises 248 residues: MHKLVLIRHGESTWNLENRFTGWVDVDLTDTGIAQARQGGRLLREAGFTFDLAYTSVLKRAIRTLWHVQDEMDLMWIPTRTEWRLNERHYGGLSGLNKAETAAQYGDQQVLVWRRSYDTPPPALEAGDERDAYGNPRYAGLPREQVPLTECLKDTVARVLPLWETSIAPDIKSGKRVVIAAHGNSIRALVKYLDNISDDDIVGLNIPNGTPLVYELDANLKPIRHYYLGDQEAIAASLAAVAGQGKAK.

Residues 8 to 15, 21 to 22, Arg-60, 87 to 90, Lys-98, 114 to 115, and 183 to 184 each bind substrate; these read RHGESTWN, TG, ERHY, RR, and GN. The active-site Tele-phosphohistidine intermediate is His-9. The active-site Proton donor/acceptor is the Glu-87.

The protein belongs to the phosphoglycerate mutase family. BPG-dependent PGAM subfamily. Homodimer.

It carries out the reaction (2R)-2-phosphoglycerate = (2R)-3-phosphoglycerate. It participates in carbohydrate degradation; glycolysis; pyruvate from D-glyceraldehyde 3-phosphate: step 3/5. Functionally, catalyzes the interconversion of 2-phosphoglycerate and 3-phosphoglycerate. The protein is 2,3-bisphosphoglycerate-dependent phosphoglycerate mutase of Ralstonia nicotianae (strain ATCC BAA-1114 / GMI1000) (Ralstonia solanacearum).